Here is a 342-residue protein sequence, read N- to C-terminus: Cyclin pch1 (342 aa).

Positions 261–342 are disordered; it reads LPIDQKNGSH…TDKEMETEAS (82 aa). The span at 278 to 314 shows a compositional bias: polar residues; sequence TPSSLASVSTQATPQHQNSSGRTDSFHSLNTETPSKS. Thr300 is subject to Phosphothreonine. Ser302 bears the Phosphoserine mark. Residues 329-342 show a composition bias toward basic and acidic residues; the sequence is KSSDTDKEMETEAS.

This sequence belongs to the cyclin family. Cyclin C subfamily. Interacts with cdc2 protein kinase and with the N-terminal domain of cdk9.

The protein resides in the nucleus. In terms of biological role, essential for progression through the whole cell cycle. This chain is Cyclin pch1 (pch1), found in Schizosaccharomyces pombe (strain 972 / ATCC 24843) (Fission yeast).